We begin with the raw amino-acid sequence, 249 residues long: Eukaryotic translation initiation factor 3 subunit K (249 aa).

The PCI domain maps to 46 to 222; it reads FDCYANLALL…VKVPTNKENE (177 aa).

The protein belongs to the eIF-3 subunit K family. Component of the eukaryotic translation initiation factor 3 (eIF-3) complex.

The protein localises to the cytoplasm. Component of the eukaryotic translation initiation factor 3 (eIF-3) complex, which is involved in protein synthesis of a specialized repertoire of mRNAs and, together with other initiation factors, stimulates binding of mRNA and methionyl-tRNAi to the 40S ribosome. The eIF-3 complex specifically targets and initiates translation of a subset of mRNAs involved in cell proliferation. This chain is Eukaryotic translation initiation factor 3 subunit K, found in Neosartorya fischeri (strain ATCC 1020 / DSM 3700 / CBS 544.65 / FGSC A1164 / JCM 1740 / NRRL 181 / WB 181) (Aspergillus fischerianus).